We begin with the raw amino-acid sequence, 296 residues long: Bifunctional protein FolD (296 aa).

NADP(+) contacts are provided by residues 166–168 (GRS), serine 195, and isoleucine 236.

The protein belongs to the tetrahydrofolate dehydrogenase/cyclohydrolase family. In terms of assembly, homodimer.

The enzyme catalyses (6R)-5,10-methylene-5,6,7,8-tetrahydrofolate + NADP(+) = (6R)-5,10-methenyltetrahydrofolate + NADPH. The catalysed reaction is (6R)-5,10-methenyltetrahydrofolate + H2O = (6R)-10-formyltetrahydrofolate + H(+). The protein operates within one-carbon metabolism; tetrahydrofolate interconversion. Functionally, catalyzes the oxidation of 5,10-methylenetetrahydrofolate to 5,10-methenyltetrahydrofolate and then the hydrolysis of 5,10-methenyltetrahydrofolate to 10-formyltetrahydrofolate. In Chlorobium limicola (strain DSM 245 / NBRC 103803 / 6330), this protein is Bifunctional protein FolD.